The primary structure comprises 98 residues: Large ribosomal subunit protein bL28 (98 aa).

It belongs to the bacterial ribosomal protein bL28 family.

This chain is Large ribosomal subunit protein bL28, found in Bartonella bacilliformis (strain ATCC 35685 / KC583 / Herrer 020/F12,63).